A 278-amino-acid polypeptide reads, in one-letter code: Probable endonuclease 4 (278 aa).

Residues His-66, His-106, Glu-140, Asp-172, His-175, His-209, Asp-222, His-224, and Glu-254 each contribute to the Zn(2+) site.

It belongs to the AP endonuclease 2 family. Zn(2+) serves as cofactor.

The enzyme catalyses Endonucleolytic cleavage to 5'-phosphooligonucleotide end-products.. In terms of biological role, endonuclease IV plays a role in DNA repair. It cleaves phosphodiester bonds at apurinic or apyrimidinic (AP) sites, generating a 3'-hydroxyl group and a 5'-terminal sugar phosphate. This chain is Probable endonuclease 4, found in Haloquadratum walsbyi (strain DSM 16790 / HBSQ001).